Reading from the N-terminus, the 248-residue chain is uncharacterized protein (248 aa).

A helical membrane pass occupies residues 30–50 (LIALAIFIGLIAIFMFGCKAA). Disordered stretches follow at residues 59-91 (NRDT…MDPP) and 208-248 (TTES…VSTR). Polar residues-rich tracts occupy residues 210 to 220 (ESPAPAQSTSN) and 239 to 248 (SLHNETVSTR).

Its subcellular location is the membrane. This is an uncharacterized protein from Caenorhabditis elegans.